Consider the following 574-residue polypeptide: Bifunctional NADP phosphatase/NAD kinase (574 aa).

The interval 1-297 (MVIMEGFKIA…KLIALFGNRW (297 aa)) is NADP phosphatase. Mg(2+) is bound by residues Glu-69, Asp-87, Ile-89, Asp-90, and Asp-243. Positions 302–574 (VKFGIVVRED…NKLSRCLGIK (273 aa)) are NAD kinase. Asp-362 acts as the Proton acceptor in catalysis. Residues 362 to 363 (DG), Arg-367, 436 to 437 (NE), Lys-447, Arg-464, Asp-466, and 477 to 482 (TAYSLS) contribute to the NAD(+) site.

The protein in the N-terminal section; belongs to the inositol monophosphatase superfamily. It in the C-terminal section; belongs to the NAD kinase family. As to quaternary structure, homotetramer. It depends on Mg(2+) as a cofactor.

The protein localises to the cytoplasm. It carries out the reaction NAD(+) + ATP = ADP + NADP(+) + H(+). The catalysed reaction is NADP(+) + H2O = phosphate + NAD(+). It catalyses the reaction UTP + NAD(+) = UDP + NADP(+) + H(+). The enzyme catalyses 5-methyl-UTP + NAD(+) = 5-methyl-UDP + NADP(+) + H(+). It carries out the reaction CTP + NAD(+) = CDP + NADP(+) + H(+). The catalysed reaction is GTP + NAD(+) = GDP + NADP(+) + H(+). It catalyses the reaction dATP + NAD(+) = dADP + NADP(+) + H(+). The enzyme catalyses NADPH + H2O = phosphate + NADH. It carries out the reaction adenosine 2'-phosphate + H2O = adenosine + phosphate. The catalysed reaction is beta-D-fructose 1,6-bisphosphate + H2O = beta-D-fructose 6-phosphate + phosphate. Phosphatase activity is slightly inhibited by ADP, NADH and ATP, and moderately inhibited by NAD and 5'-AMP. Kinase activity is slightly inhibited by ADP and NADP. In terms of biological role, involved in the regulation of the intracellular balance between NAD(H) and NADP(H), and is a key enzyme in the biosynthesis of NADP. Catalyzes the phosphorylation and dephosphorylation of NAD and NADP, respectively. Although it shows conflicting dual activities and is able to supply NADP, it seems that its physiological role is to prevent excess accumulation of NADP. Kinase can use ATP and other nucleoside triphosphates (UTP, TTP, CTP, GTP) as well as inorganic polyphosphate (poly(P)) as phosphoryl donors, however poly(P) is not considered to be the physiological phosphoryl donor. NAD is the preferred substrate for the kinase, but NADH can also be used as phosphoryl acceptor. Phosphatase can use NADP or NADPH as phosphoryl donor, but NADP is the preferred substrate. Phosphatase also has an activity toward the terminal phosphate group at C-2 of adenosine in 2'-AMP and toward the phosphate group at C-1 of fructose 1,6-bisphosphate, but not toward inositol 1-phosphate. The chain is Bifunctional NADP phosphatase/NAD kinase from Methanocaldococcus jannaschii (strain ATCC 43067 / DSM 2661 / JAL-1 / JCM 10045 / NBRC 100440) (Methanococcus jannaschii).